The sequence spans 205 residues: ATP synthase subunit b (205 aa).

The chain crosses the membrane as a helical span at residues 51 to 69 (FAWRCLDFAVLLAIVVWAL).

This sequence belongs to the ATPase B chain family. F-type ATPases have 2 components, F(1) - the catalytic core - and F(0) - the membrane proton channel. F(1) has five subunits: alpha(3), beta(3), gamma(1), delta(1), epsilon(1). F(0) has three main subunits: a(1), b(2) and c(10-14). The alpha and beta chains form an alternating ring which encloses part of the gamma chain. F(1) is attached to F(0) by a central stalk formed by the gamma and epsilon chains, while a peripheral stalk is formed by the delta and b chains.

Its subcellular location is the cell inner membrane. Its function is as follows. F(1)F(0) ATP synthase produces ATP from ADP in the presence of a proton or sodium gradient. F-type ATPases consist of two structural domains, F(1) containing the extramembraneous catalytic core and F(0) containing the membrane proton channel, linked together by a central stalk and a peripheral stalk. During catalysis, ATP synthesis in the catalytic domain of F(1) is coupled via a rotary mechanism of the central stalk subunits to proton translocation. In terms of biological role, component of the F(0) channel, it forms part of the peripheral stalk, linking F(1) to F(0). The chain is ATP synthase subunit b from Geotalea uraniireducens (strain Rf4) (Geobacter uraniireducens).